The chain runs to 336 residues: Tetraacyldisaccharide 4'-kinase (336 aa).

60–67 (TVGGTGKT) is an ATP binding site.

This sequence belongs to the LpxK family.

The catalysed reaction is a lipid A disaccharide + ATP = a lipid IVA + ADP + H(+). It participates in glycolipid biosynthesis; lipid IV(A) biosynthesis; lipid IV(A) from (3R)-3-hydroxytetradecanoyl-[acyl-carrier-protein] and UDP-N-acetyl-alpha-D-glucosamine: step 6/6. Its function is as follows. Transfers the gamma-phosphate of ATP to the 4'-position of a tetraacyldisaccharide 1-phosphate intermediate (termed DS-1-P) to form tetraacyldisaccharide 1,4'-bis-phosphate (lipid IVA). This is Tetraacyldisaccharide 4'-kinase from Pseudomonas fluorescens (strain Pf0-1).